A 259-amino-acid polypeptide reads, in one-letter code: Thiazole synthase (259 aa).

Lys-99 acts as the Schiff-base intermediate with DXP in catalysis. Residues Gly-160, 186–187 (AG), and 208–209 (NT) each bind 1-deoxy-D-xylulose 5-phosphate.

This sequence belongs to the ThiG family. As to quaternary structure, homotetramer. Forms heterodimers with either ThiH or ThiS.

It localises to the cytoplasm. The enzyme catalyses [ThiS sulfur-carrier protein]-C-terminal-Gly-aminoethanethioate + 2-iminoacetate + 1-deoxy-D-xylulose 5-phosphate = [ThiS sulfur-carrier protein]-C-terminal Gly-Gly + 2-[(2R,5Z)-2-carboxy-4-methylthiazol-5(2H)-ylidene]ethyl phosphate + 2 H2O + H(+). Its pathway is cofactor biosynthesis; thiamine diphosphate biosynthesis. Functionally, catalyzes the rearrangement of 1-deoxy-D-xylulose 5-phosphate (DXP) to produce the thiazole phosphate moiety of thiamine. Sulfur is provided by the thiocarboxylate moiety of the carrier protein ThiS. In vitro, sulfur can be provided by H(2)S. This is Thiazole synthase from Porphyromonas gingivalis (strain ATCC BAA-308 / W83).